Reading from the N-terminus, the 346-residue chain is Uroporphyrinogen decarboxylase (346 aa).

Residues 21–25 (RQAGR), Phe-40, Asp-71, Tyr-146, Ser-201, and His-316 each bind substrate.

The protein belongs to the uroporphyrinogen decarboxylase family. In terms of assembly, homodimer.

It is found in the cytoplasm. It catalyses the reaction uroporphyrinogen III + 4 H(+) = coproporphyrinogen III + 4 CO2. It participates in porphyrin-containing compound metabolism; protoporphyrin-IX biosynthesis; coproporphyrinogen-III from 5-aminolevulinate: step 4/4. Functionally, catalyzes the decarboxylation of four acetate groups of uroporphyrinogen-III to yield coproporphyrinogen-III. The sequence is that of Uroporphyrinogen decarboxylase from Rickettsia felis (strain ATCC VR-1525 / URRWXCal2) (Rickettsia azadi).